The primary structure comprises 229 residues: GTP cyclohydrolase 1 (229 aa).

Residues 1–26 form a disordered region; that stretch reads MDAKIKPLRGGKPADARPEFQPAELD. Zn(2+) is bound by residues Cys-118, His-121, and Cys-189.

This sequence belongs to the GTP cyclohydrolase I family. Toroid-shaped homodecamer, composed of two pentamers of five dimers.

The enzyme catalyses GTP + H2O = 7,8-dihydroneopterin 3'-triphosphate + formate + H(+). The protein operates within cofactor biosynthesis; 7,8-dihydroneopterin triphosphate biosynthesis; 7,8-dihydroneopterin triphosphate from GTP: step 1/1. This Rhodopseudomonas palustris (strain BisB5) protein is GTP cyclohydrolase 1.